A 199-amino-acid chain; its full sequence is Large ribosomal subunit protein bL25 (199 aa).

Belongs to the bacterial ribosomal protein bL25 family. CTC subfamily. Part of the 50S ribosomal subunit; part of the 5S rRNA/L5/L18/L25 subcomplex. Contacts the 5S rRNA. Binds to the 5S rRNA independently of L5 and L18.

In terms of biological role, this is one of the proteins that binds to the 5S RNA in the ribosome where it forms part of the central protuberance. This chain is Large ribosomal subunit protein bL25, found in Pseudomonas fluorescens (strain ATCC BAA-477 / NRRL B-23932 / Pf-5).